The following is a 358-amino-acid chain: Alpha-ketoglutarate-dependent L-arginine hydroxylase (358 aa).

Residues 1 to 21 (MTESPTTHHGAAPPDSVATPV) form a disordered region. Residues 117–135 (LSFLLMLYAGLLGDVFGWA) traverse the membrane as a helical segment. 156–158 (LVS) serves as a coordination point for L-arginine. H168 and E170 together coordinate Fe cation. T194 lines the 2-oxoglutarate pocket. An L-arginine-binding site is contributed by 268–270 (DGD). H316 provides a ligand contact to Fe cation. Residues R330 and R334 each contribute to the 2-oxoglutarate site. An L-arginine-binding site is contributed by R334.

The protein belongs to the clavaminate synthase family. The cofactor is Fe cation.

It is found in the membrane. The enzyme catalyses L-arginine + 2-oxoglutarate + O2 = (2S,3S)-hydroxyarginine + succinate + CO2. The protein operates within antibiotic biosynthesis. Involved in the biosynthesis of capreomycidine, an unusual amino acid used by non-ribosomal peptide synthases (NRPS) to make the tuberactinomycin class of peptide antibiotics such as viomycin and capreomycin. Catalyzes the stereospecific hydroxylation of the C3 of (2S)-arginine to generate (3S)-hydroxy-(2S)-arginine. Usually clavaminic acid synthase-like oxygenases catalyze the formation of threo diastereomers, however VioC produces the erythro diastereomer of beta-carbon-hydroxylated L-arginine. It exerts a broad substrate specificity by accepting the analogs L-homoarginine and L-canavanine for the beta-carbon hydroxylation. This is Alpha-ketoglutarate-dependent L-arginine hydroxylase (vioC) from Streptomyces vinaceus.